The following is a 354-amino-acid chain: Type II restriction enzyme BanI (354 aa).

As to quaternary structure, homodimer.

The enzyme catalyses Endonucleolytic cleavage of DNA to give specific double-stranded fragments with terminal 5'-phosphates.. Functionally, a P subtype restriction enzyme that recognizes the double-stranded sequence 5'-GGYRCC-3' and cleaves after G-1. In Aneurinibacillus aneurinilyticus (Bacillus aneurinolyticus), this protein is Type II restriction enzyme BanI (banIR).